The following is a 121-amino-acid chain: Large ribosomal subunit protein bL12 (121 aa).

This sequence belongs to the bacterial ribosomal protein bL12 family. Homodimer. Part of the ribosomal stalk of the 50S ribosomal subunit. Forms a multimeric L10(L12)X complex, where L10 forms an elongated spine to which 2 to 4 L12 dimers bind in a sequential fashion. Binds GTP-bound translation factors.

Its function is as follows. Forms part of the ribosomal stalk which helps the ribosome interact with GTP-bound translation factors. Is thus essential for accurate translation. In Bacillus pumilus (strain SAFR-032), this protein is Large ribosomal subunit protein bL12.